A 648-amino-acid chain; its full sequence is L-aspartate oxidase 2-b, chloroplastic (648 aa).

Residues 98–101 (SGIA), lysine 120, 127–134 (STNYAQGG), and aspartate 298 each bind FAD. The Proton donor/acceptor role is filled by arginine 373. FAD is bound by residues glutamate 458 and 474 to 475 (SL).

It belongs to the FAD-dependent oxidoreductase 2 family. NadB subfamily. It depends on FAD as a cofactor.

It is found in the plastid. The protein localises to the chloroplast. The catalysed reaction is L-aspartate + O2 = iminosuccinate + H2O2. It participates in alkaloid biosynthesis; nicotine biosynthesis. It functions in the pathway cofactor biosynthesis; NAD(+) biosynthesis; iminoaspartate from L-aspartate (oxidase route): step 1/1. Functionally, involved in the biosynthesis of pyridine alkaloid natural products, leading mainly to the production of anabasine, anatabine, nicotine and nornicotine, effective deterrents against herbivores with antiparasitic and pesticide properties (neurotoxins); nornicotine serves as the precursor in the synthesis of the carcinogen compound N'-nitrosonornicotine (NNN). Catalyzes the oxidation of L-aspartate to iminoaspartate. The sequence is that of L-aspartate oxidase 2-b, chloroplastic from Nicotiana tabacum (Common tobacco).